The primary structure comprises 510 residues: D-alanine--D-alanyl carrier protein ligase (510 aa).

An ATP-binding site is contributed by 157 to 158 (TS). D-alanine is bound at residue D202. ATP is bound at residue 297–302 (NTYGPT). V306 is a binding site for D-alanine. 2 residues coordinate ATP: D389 and K498. Residue K498 participates in D-alanine binding.

It belongs to the ATP-dependent AMP-binding enzyme family. DltA subfamily.

It localises to the cytoplasm. The enzyme catalyses holo-[D-alanyl-carrier protein] + D-alanine + ATP = D-alanyl-[D-alanyl-carrier protein] + AMP + diphosphate. It functions in the pathway cell wall biogenesis; lipoteichoic acid biosynthesis. Functionally, catalyzes the first step in the D-alanylation of lipoteichoic acid (LTA), the activation of D-alanine and its transfer onto the D-alanyl carrier protein (Dcp) DltC. In an ATP-dependent two-step reaction, forms a high energy D-alanyl-AMP intermediate, followed by transfer of the D-alanyl residue as a thiol ester to the phosphopantheinyl prosthetic group of the Dcp. D-alanylation of LTA plays an important role in modulating the properties of the cell wall in Gram-positive bacteria, influencing the net charge of the cell wall. In Listeria monocytogenes serovar 1/2a (strain ATCC BAA-679 / EGD-e), this protein is D-alanine--D-alanyl carrier protein ligase.